Reading from the N-terminus, the 251-residue chain is Phosphate import ATP-binding protein PstB 2 (251 aa).

The region spanning 6–246 (FNIENLDLFY…PRDDRTRGYV (241 aa)) is the ABC transporter domain. 38 to 45 (GPSGCGKS) is a binding site for ATP.

This sequence belongs to the ABC transporter superfamily. Phosphate importer (TC 3.A.1.7) family. As to quaternary structure, the complex is composed of two ATP-binding proteins (PstB), two transmembrane proteins (PstC and PstA) and a solute-binding protein (PstS).

Its subcellular location is the cell inner membrane. The enzyme catalyses phosphate(out) + ATP + H2O = ADP + 2 phosphate(in) + H(+). Part of the ABC transporter complex PstSACB involved in phosphate import. Responsible for energy coupling to the transport system. The polypeptide is Phosphate import ATP-binding protein PstB 2 (Vibrio cholerae serotype O1 (strain ATCC 39315 / El Tor Inaba N16961)).